The sequence spans 42 residues: Photosystem I reaction center subunit IX (42 aa).

Residues 7 to 27 traverse the membrane as a helical segment; it reads YLSTAPVLAAVWFTVLAGILI.

Belongs to the PsaJ family.

It is found in the plastid. The protein resides in the chloroplast thylakoid membrane. May help in the organization of the PsaE and PsaF subunits. The chain is Photosystem I reaction center subunit IX from Ostreococcus tauri.